Consider the following 216-residue polypeptide: 3-keto-L-gulonate-6-phosphate decarboxylase UlaD (216 aa).

D11 is a binding site for substrate. Mg(2+) is bound by residues E33 and D62. R192 lines the substrate pocket.

It belongs to the HPS/KGPDC family. KGPDC subfamily. In terms of assembly, homodimer. It depends on Mg(2+) as a cofactor.

It carries out the reaction 3-dehydro-L-gulonate 6-phosphate + H(+) = L-xylulose 5-phosphate + CO2. The protein operates within cofactor degradation; L-ascorbate degradation; D-xylulose 5-phosphate from L-ascorbate: step 2/4. Its function is as follows. Catalyzes the decarboxylation of 3-keto-L-gulonate-6-P into L-xylulose-5-P. Is involved in the anaerobic L-ascorbate utilization. This Salmonella typhi protein is 3-keto-L-gulonate-6-phosphate decarboxylase UlaD.